We begin with the raw amino-acid sequence, 83 residues long: Cytochrome b559 subunit alpha (83 aa).

A helical transmembrane segment spans residues 21 to 35 (VIHSITIPSLFIAGW). Residue His-23 participates in heme binding.

Belongs to the PsbE/PsbF family. Heterodimer of an alpha subunit and a beta subunit. PSII is composed of 1 copy each of membrane proteins PsbA, PsbB, PsbC, PsbD, PsbE, PsbF, PsbH, PsbI, PsbJ, PsbK, PsbL, PsbM, PsbT, PsbX, PsbY, PsbZ, Psb30/Ycf12, at least 3 peripheral proteins of the oxygen-evolving complex and a large number of cofactors. It forms dimeric complexes. Heme b is required as a cofactor.

The protein localises to the plastid. It is found in the chloroplast thylakoid membrane. Its function is as follows. This b-type cytochrome is tightly associated with the reaction center of photosystem II (PSII). PSII is a light-driven water:plastoquinone oxidoreductase that uses light energy to abstract electrons from H(2)O, generating O(2) and a proton gradient subsequently used for ATP formation. It consists of a core antenna complex that captures photons, and an electron transfer chain that converts photonic excitation into a charge separation. The protein is Cytochrome b559 subunit alpha of Staurastrum punctulatum (Green alga).